We begin with the raw amino-acid sequence, 2184 residues long: Chromodomain-helicase-DNA-binding protein 8 (2184 aa).

Disordered stretches follow at residues 379–399 and 419–527; these read VKTS…KQEK and IPRV…KRKK. Residues 387 to 399 show a composition bias toward basic and acidic residues; the sequence is ESRKLDSQKKQEK. Residues 425-437 show a composition bias toward acidic residues; the sequence is EDELPSVNPEDDD. Positions 448-459 are enriched in basic and acidic residues; that stretch reads GETSDRSKDEKP. The segment covering 516-527 has biased composition (basic residues); it reads KRRSNRQVKRKK. 2 consecutive Chromo domains span residues 586-653 and 668-734; these read AIVD…TQMQ and VEVD…RVAR. The Helicase ATP-binding domain maps to 767-941; that stretch reads LFNWYNRQNC…FSLLHFLEPT (175 aa). 780-787 serves as a coordination point for ATP; sequence DEMGLGKT. The DEAH box signature appears at 892-895; the sequence is DEAH. The Helicase C-terminal domain occupies 1081 to 1252; that stretch reads LIDKLLPKLR…FTKKEIEDLL (172 aa). Disordered regions lie at residues 1907–1989 and 2039–2076; these read GISG…EESR and WSSP…PAPD. 2 stretches are compositionally biased toward low complexity: residues 1912–1961 and 2040–2054; these read SRPS…SNSE and SSPR…DSPD.

Belongs to the SNF2/RAD54 helicase family. CHD8 subfamily. Component of some MLL1/MLL complex.

The protein localises to the nucleus. It catalyses the reaction ATP + H2O = ADP + phosphate + H(+). ATP-dependent chromatin-remodeling factor, it slides nucleosomes along DNA; nucleosome sliding requires ATP. Acts as a transcription repressor by remodeling chromatin structure and recruiting histone H1 to target genes. Suppresses p53/tp53-mediated apoptosis by recruiting histone H1 and preventing p53/tp53 transactivation activity. Acts as a negative regulator of Wnt signaling pathway by regulating beta-catenin (ctnnb1) activity. Negatively regulates ctnnb1-targeted gene expression by being recruited specifically to the promoter regions of several ctnnb1 responsive genes. May also act as a transcription activator by participating in efficient U6 RNA polymerase III transcription. This Xenopus tropicalis (Western clawed frog) protein is Chromodomain-helicase-DNA-binding protein 8.